The sequence spans 369 residues: Dihydroorotate dehydrogenase (quinone) (369 aa).

FMN contacts are provided by residues 66–70 and Thr-90; that span reads AGFDK. Lys-70 contacts substrate. 115–119 is a substrate binding site; sequence NRMGF. FMN-binding residues include Asn-143 and Asn-176. A substrate-binding site is contributed by Asn-176. The active-site Nucleophile is Ser-179. Asn-181 lines the substrate pocket. Lys-217 and Thr-245 together coordinate FMN. Residue 246 to 247 participates in substrate binding; sequence NT. FMN-binding positions include Gly-271, Gly-300, and 321–322; that span reads YT.

The protein belongs to the dihydroorotate dehydrogenase family. Type 2 subfamily. In terms of assembly, monomer. FMN serves as cofactor.

Its subcellular location is the cell membrane. The catalysed reaction is (S)-dihydroorotate + a quinone = orotate + a quinol. It participates in pyrimidine metabolism; UMP biosynthesis via de novo pathway; orotate from (S)-dihydroorotate (quinone route): step 1/1. Catalyzes the conversion of dihydroorotate to orotate with quinone as electron acceptor. The sequence is that of Dihydroorotate dehydrogenase (quinone) from Nocardia farcinica (strain IFM 10152).